The sequence spans 86 residues: MPKSEIHPKWYPDAKVICNGEVVMTTGSTQPELHVDVWSGNHPFFTGTQKILDTEGRVDRFMKKYGMGSANSATSKEQKEEKDSNK.

The disordered stretch occupies residues 65–86 (YGMGSANSATSKEQKEEKDSNK). Over residues 76–86 (KEQKEEKDSNK) the composition is skewed to basic and acidic residues.

The protein belongs to the bacterial ribosomal protein bL31 family. Type A subfamily. In terms of assembly, part of the 50S ribosomal subunit.

Its function is as follows. Binds the 23S rRNA. This Prochlorococcus marinus (strain MIT 9312) protein is Large ribosomal subunit protein bL31.